Consider the following 148-residue polypeptide: Lysozyme C-1 (148 aa).

An N-terminal signal peptide occupies residues 1 to 18; the sequence is MKALLTLGLLLLSVTAQA. Residues 19–148 enclose the C-type lysozyme domain; that stretch reads KVYNRCELAR…LSQYIRNCGV (130 aa). 4 cysteine pairs are disulfide-bonded: Cys24–Cys146, Cys48–Cys134, Cys83–Cys99, and Cys95–Cys113. Catalysis depends on residues Glu53 and Asp71.

It belongs to the glycosyl hydrolase 22 family. Monomer. Expressed strongly only in small intestine.

It is found in the secreted. It carries out the reaction Hydrolysis of (1-&gt;4)-beta-linkages between N-acetylmuramic acid and N-acetyl-D-glucosamine residues in a peptidoglycan and between N-acetyl-D-glucosamine residues in chitodextrins.. Functionally, lysozymes have primarily a bacteriolytic function; those in tissues and body fluids are associated with the monocyte-macrophage system and enhance the activity of immunoagents. Lyz1 is active against a range of Gram-positive and Gram-negative bacteria. Less effective than Lyz2 in killing Gram-negative bacteria. Lyz1 and Lyz2 are equally effective in killing Gram-positive bacteria. This chain is Lysozyme C-1 (Lyz1), found in Mus musculus (Mouse).